The primary structure comprises 373 residues: D-alanine--D-alanine ligase (373 aa).

Residues 156–363 (KKLWSAAGLP…YPTLLATMVE (208 aa)) enclose the ATP-grasp domain. Residue 184–239 (LQRLGLPAYVKPARGGSSIGVSRVSSFDELPAAIAAARRHDPKVIVEAAINGRELE) coordinates ATP. 3 residues coordinate Mg(2+): Asp318, Glu330, and Asn332.

This sequence belongs to the D-alanine--D-alanine ligase family. Requires Mg(2+) as cofactor. The cofactor is Mn(2+).

Its subcellular location is the cytoplasm. The enzyme catalyses 2 D-alanine + ATP = D-alanyl-D-alanine + ADP + phosphate + H(+). The protein operates within cell wall biogenesis; peptidoglycan biosynthesis. Cell wall formation. The protein is D-alanine--D-alanine ligase of Mycobacterium ulcerans (strain Agy99).